The sequence spans 357 residues: Tetraacyldisaccharide 4'-kinase (357 aa).

Residue 49 to 56 coordinates ATP; it reads TIGGTGKT.

This sequence belongs to the LpxK family.

The enzyme catalyses a lipid A disaccharide + ATP = a lipid IVA + ADP + H(+). The protein operates within glycolipid biosynthesis; lipid IV(A) biosynthesis; lipid IV(A) from (3R)-3-hydroxytetradecanoyl-[acyl-carrier-protein] and UDP-N-acetyl-alpha-D-glucosamine: step 6/6. Transfers the gamma-phosphate of ATP to the 4'-position of a tetraacyldisaccharide 1-phosphate intermediate (termed DS-1-P) to form tetraacyldisaccharide 1,4'-bis-phosphate (lipid IVA). This is Tetraacyldisaccharide 4'-kinase from Porphyromonas gingivalis (strain ATCC 33277 / DSM 20709 / CIP 103683 / JCM 12257 / NCTC 11834 / 2561).